Consider the following 436-residue polypeptide: Probable ABC transporter binding protein NosD (436 aa).

The first 27 residues, 1–27, serve as a signal peptide directing secretion; it reads MFKAQATFSRYSAAVSLLLLFSGAAQA. PbH1 repeat units lie at residues 85-113, 115-136, 137-166, 167-188, 189-210, 233-255, 293-314, and 316-354; these read APDV…FILP, AERA…FVDG, TRDV…HLFA, VSGA…YIDT, SNGN…HYMF, SRKL…LMNY, SLFN…HLTA, and SEDN…YWSD.

This sequence belongs to the NosD family. In terms of assembly, the complex may be composed of an ATP-binding protein (NosF), a transmembrane protein (NosY) and a solute-binding protein (NosD).

The protein resides in the periplasm. In terms of biological role, required for the assembly of the copper chromophores of nitrous oxide reductase. Could be part of the ABC transporter complex NosDFY. The sequence is that of Probable ABC transporter binding protein NosD from Stutzerimonas stutzeri (Pseudomonas stutzeri).